The sequence spans 955 residues: Thrombospondin-4 (955 aa).

Positions Met-1–Ala-24 are cleaved as a signal peptide. The region spanning Gln-25–Gly-192 is the Laminin G-like domain. The EGF-like 1 domain occupies Pro-281–Thr-320. Intrachain disulfides connect Cys-285–Cys-296, Cys-290–Cys-305, Cys-308–Cys-319, Cys-325–Cys-336, Cys-330–Cys-345, Cys-348–Cys-372, Cys-378–Cys-392, Cys-386–Cys-401, Cys-404–Cys-416, Cys-422–Cys-435, Cys-429–Cys-445, Cys-447–Cys-458, Cys-474–Cys-479, Cys-484–Cys-504, Cys-520–Cys-540, Cys-543–Cys-563, Cys-579–Cys-599, Cys-602–Cys-622, Cys-640–Cys-660, Cys-680–Cys-700, and Cys-716–Cys-937. The region spanning Asp-321–Gln-358 is the EGF-like 2; calcium-binding domain. Residues Asp-374 to Gly-415 form the EGF-like 3; calcium-binding domain. The EGF-like 4 domain maps to Pro-418–Gly-459. 8 TSP type-3 repeats span residues Lys-460–Gln-492, Glu-493–Gln-528, Lys-529–Gln-551, Arg-552–Gln-587, Lys-588–Gln-610, Ser-611–Gln-648, Leu-649–Gln-688, and Glu-689–Leu-724. N-linked (GlcNAc...) asparagine glycosylation is present at Asn-609. The segment at Gln-610–Asp-678 is disordered. Positions Thr-637–Leu-649 are enriched in polar residues. A compositionally biased stretch (acidic residues) spans Gly-657–Gly-668. The TSP C-terminal domain maps to Arg-728 to Pro-942. Asn-938 carries an N-linked (GlcNAc...) asparagine glycan.

The protein belongs to the thrombospondin family. Homotrimer; disulfide-linked.

The protein localises to the endoplasmic reticulum. It is found in the sarcoplasmic reticulum. It localises to the secreted. Its subcellular location is the extracellular space. The protein resides in the extracellular matrix. Adhesive glycoprotein that mediates cell-to-cell and cell-to-matrix interactions and may be involved in various processes including cellular proliferation, migration, adhesion and attachment. May play a role in ER stress response. May participate in the genesis and function of cardiac and skeletal muscle. The polypeptide is Thrombospondin-4 (thbs4) (Xenopus laevis (African clawed frog)).